Consider the following 158-residue polypeptide: Transcription antitermination protein NusB (158 aa).

It belongs to the NusB family.

Involved in transcription antitermination. Required for transcription of ribosomal RNA (rRNA) genes. Binds specifically to the boxA antiterminator sequence of the ribosomal RNA (rrn) operons. This chain is Transcription antitermination protein NusB, found in Bartonella henselae (strain ATCC 49882 / DSM 28221 / CCUG 30454 / Houston 1) (Rochalimaea henselae).